A 516-amino-acid polypeptide reads, in one-letter code: Alstonine synthase (516 aa).

The chain crosses the membrane as a helical span at residues 6 to 26 (NFSLTSPIFLLLSSLFLIILL). Cys453 contacts heme.

Belongs to the cytochrome P450 family. Heme serves as cofactor. As to expression, highly expressed in stems. Expressed at low levels in roots.

The protein resides in the endoplasmic reticulum membrane. The catalysed reaction is tetrahydroalstonine + A + reduced [NADPH--hemoprotein reductase] + O2 = alstonine + AH2 + oxidized [NADPH--hemoprotein reductase] + 2 H2O + H(+). It catalyses the reaction ajmalicine + A + reduced [NADPH--hemoprotein reductase] + O2 = serpentine + AH2 + oxidized [NADPH--hemoprotein reductase] + 2 H2O + H(+). The protein operates within alkaloid biosynthesis. Involved in monoterpene indole alkaloids (MIAs) biosynthesis. Converts by aromatization the tetrahydro-beta-carboline alkaloids tetrahydroalstonine and ajmalicine to the corresponding beta-carboline alkaloids alstonine and serpentine, respectively. The polypeptide is Alstonine synthase (Catharanthus roseus (Madagascar periwinkle)).